Reading from the N-terminus, the 229-residue chain is Urease accessory protein UreF (229 aa).

Belongs to the UreF family. In terms of assembly, ureD, UreF and UreG form a complex that acts as a GTP-hydrolysis-dependent molecular chaperone, activating the urease apoprotein by helping to assemble the nickel containing metallocenter of UreC. The UreE protein probably delivers the nickel.

The protein resides in the cytoplasm. Required for maturation of urease via the functional incorporation of the urease nickel metallocenter. The polypeptide is Urease accessory protein UreF (Trichormus variabilis (strain ATCC 29413 / PCC 7937) (Anabaena variabilis)).